The primary structure comprises 301 residues: GTPase Era (301 aa).

The Era-type G domain maps to 7-175 (YCGFIAIVGR…AGIVRKHLPE (169 aa)). The segment at 15–22 (GRPNVGKS) is G1. 15–22 (GRPNVGKS) serves as a coordination point for GTP. The G2 stretch occupies residues 41-45 (QTTRH). A G3 region spans residues 62 to 65 (DTPG). GTP is bound by residues 62–66 (DTPGL) and 124–127 (NKVD). The segment at 124-127 (NKVD) is G4. Residues 154 to 156 (ISA) form a G5 region. One can recognise a KH type-2 domain in the interval 206 to 283 (LGAELPYSVT…HLELWVKVKS (78 aa)).

Belongs to the TRAFAC class TrmE-Era-EngA-EngB-Septin-like GTPase superfamily. Era GTPase family. As to quaternary structure, monomer.

Its subcellular location is the cytoplasm. The protein localises to the cell inner membrane. In terms of biological role, an essential GTPase that binds both GDP and GTP, with rapid nucleotide exchange. Plays a role in 16S rRNA processing and 30S ribosomal subunit biogenesis and possibly also in cell cycle regulation and energy metabolism. The protein is GTPase Era of Salmonella paratyphi B (strain ATCC BAA-1250 / SPB7).